The chain runs to 86 residues: MANIKSQVKRIRTNEAARLRNQSVKSSLRTAIRSFREAAAAGDKDKANELLVATSRKLDKAASKGVIHANQAANKKSALAQAVNKI.

Belongs to the bacterial ribosomal protein bS20 family.

Its function is as follows. Binds directly to 16S ribosomal RNA. In Rhodococcus opacus (strain B4), this protein is Small ribosomal subunit protein bS20.